The sequence spans 132 residues: Small ribosomal subunit protein uS8 (132 aa).

It belongs to the universal ribosomal protein uS8 family. Part of the 30S ribosomal subunit. Contacts proteins S5 and S12.

Its function is as follows. One of the primary rRNA binding proteins, it binds directly to 16S rRNA central domain where it helps coordinate assembly of the platform of the 30S subunit. The polypeptide is Small ribosomal subunit protein uS8 (Halothermothrix orenii (strain H 168 / OCM 544 / DSM 9562)).